The sequence spans 317 residues: MGEVQREKVAVIIGPTAVGKTKLSIDLAKALNGEIISGDSMQIYRTMDIGTAKVTKAEMDGIPHYMIDIKNPEDSFSVAEFQERVRKHIREITERGKLPIIVGGTGLYIQSVLFDYQFTDDAGDVIYREQREKLALERGVEYVHEKLQEVDPESAERIHANNVRRVIRALEIFHTTGEKMSEQIEKQEKELLYDVSLIGLTMDREMLYDRINLRVDLMMEQGLLEEVEGLYNRGIRDCQSIQAIGYKEIYDYFENRASLEDAVSQLKTNSRRYAKRQLTWFRNKMDVTWFDVTDGEKTSEILRYIEGKLQVKSNNSK.

Position 14 to 21 (14 to 21 (GPTAVGKT)) interacts with ATP. Position 16 to 21 (16 to 21 (TAVGKT)) interacts with substrate. An interaction with substrate tRNA region spans residues 39 to 42 (DSMQ).

This sequence belongs to the IPP transferase family. Monomer. It depends on Mg(2+) as a cofactor.

The enzyme catalyses adenosine(37) in tRNA + dimethylallyl diphosphate = N(6)-dimethylallyladenosine(37) in tRNA + diphosphate. Its function is as follows. Catalyzes the transfer of a dimethylallyl group onto the adenine at position 37 in tRNAs that read codons beginning with uridine, leading to the formation of N6-(dimethylallyl)adenosine (i(6)A). This chain is tRNA dimethylallyltransferase, found in Bacillus cereus (strain ATCC 14579 / DSM 31 / CCUG 7414 / JCM 2152 / NBRC 15305 / NCIMB 9373 / NCTC 2599 / NRRL B-3711).